The chain runs to 74 residues: Somatostatin-2 (74 aa).

Positions 1–46 (ARGAGLLSQDWSAVEDLLAQMSLPEADAQREAEVVSVATGGRLNLE) are excised as a propeptide. A disulfide bond links Cys63 and Cys74.

Belongs to the somatostatin family.

The protein localises to the secreted. Somatostatin inhibits the release of somatotropin. The chain is Somatostatin-2 (sst2) from Myoxocephalus scorpius (Shorthorn sculpin).